A 135-amino-acid polypeptide reads, in one-letter code: 2-iminobutanoate/2-iminopropanoate deaminase (135 aa).

The residue at position 2 (Ser-2) is an N-acetylserine. 4 positions are modified to N6-succinyllysine: Lys-13, Lys-60, Lys-67, and Lys-134.

The protein belongs to the RutC family. In terms of assembly, homotrimer. Interacts with YTHDF2. In terms of tissue distribution, expressed predominantly in liver and kidney. Lower levels in lung and brain.

It is found in the cytoplasm. The protein resides in the nucleus. The protein localises to the peroxisome. Its subcellular location is the mitochondrion. The catalysed reaction is 2-iminobutanoate + H2O = 2-oxobutanoate + NH4(+). The enzyme catalyses 2-iminopropanoate + H2O = pyruvate + NH4(+). Its function is as follows. Catalyzes the hydrolytic deamination of enamine/imine intermediates that form during the course of normal metabolism. May facilitate the release of ammonia from these potentially toxic reactive metabolites, reducing their impact on cellular components. It may act on enamine/imine intermediates formed by several types of pyridoxal-5'-phosphate-dependent dehydratases including L-threonine dehydratase. Functionally, also promotes endoribonucleolytic cleavage of some transcripts by promoting recruitment of the ribonuclease P/MRP complex. Acts by bridging YTHDF2 and the ribonuclease P/MRP complex. RIDA/HRSP12 binds to N6-methyladenosine (m6A)-containing mRNAs containing a 5'-GGUUC-3' motif: cooperative binding of RIDA/HRSP12 and YTHDF2 to such transcripts lead to recruitment of the ribonuclease P/MRP complex and subsequent endoribonucleolytic cleavage. The sequence is that of 2-iminobutanoate/2-iminopropanoate deaminase from Mus musculus (Mouse).